The chain runs to 223 residues: Deoxyribose-phosphate aldolase (223 aa).

The active-site Proton donor/acceptor is Asp-91. The active-site Schiff-base intermediate with acetaldehyde is Lys-153. The active-site Proton donor/acceptor is the Lys-182.

It belongs to the DeoC/FbaB aldolase family. DeoC type 1 subfamily.

Its subcellular location is the cytoplasm. The enzyme catalyses 2-deoxy-D-ribose 5-phosphate = D-glyceraldehyde 3-phosphate + acetaldehyde. It participates in carbohydrate degradation; 2-deoxy-D-ribose 1-phosphate degradation; D-glyceraldehyde 3-phosphate and acetaldehyde from 2-deoxy-alpha-D-ribose 1-phosphate: step 2/2. Catalyzes a reversible aldol reaction between acetaldehyde and D-glyceraldehyde 3-phosphate to generate 2-deoxy-D-ribose 5-phosphate. The polypeptide is Deoxyribose-phosphate aldolase (Yersinia pestis bv. Antiqua (strain Angola)).